Reading from the N-terminus, the 60-residue chain is uncharacterized protein (60 aa).

Residues 38–58 form a helical membrane-spanning segment; the sequence is SILAGGIIPVLFFFPLFLFLY.

Its subcellular location is the membrane. This is an uncharacterized protein from Saccharomyces cerevisiae (strain ATCC 204508 / S288c) (Baker's yeast).